Here is a 125-residue protein sequence, read N- to C-terminus: Fluoride-specific ion channel FluC (125 aa).

Helical transmembrane passes span 5-25, 33-53, 66-86, and 100-120; these read IFLVGIGGGIGSVLRFVVSLL, IFPLTTFVVNLLGCFFVGILV, VKIFFITGFCGGFTTFSSFSL, and LVLYILINIIAGCAAVLLGYI. Gly76 and Thr79 together coordinate Na(+).

Belongs to the fluoride channel Fluc/FEX (TC 1.A.43) family.

It localises to the cell inner membrane. The catalysed reaction is fluoride(in) = fluoride(out). With respect to regulation, na(+) is not transported, but it plays an essential structural role and its presence is essential for fluoride channel function. Its function is as follows. Fluoride-specific ion channel. Important for reducing fluoride concentration in the cell, thus reducing its toxicity. The chain is Fluoride-specific ion channel FluC from Azobacteroides pseudotrichonymphae genomovar. CFP2.